The following is a 105-amino-acid chain: MATGTPDSQARFGQSVKGLLTEKVNTCGTDVIALTKQVLKGSRSSELLGQAARNMVLQEDAILHSEDSLRKMAIITTHLQYQQEAIQKNVEQSPDLQDQLSHLLK.

Belongs to the BORCS7 family. As to quaternary structure, component of the BLOC-one-related complex (BORC) which is composed of BLOC1S1, BLOC1S2, BORCS5, BORCS6, BORCS7, BORCS8, KXD1 and SNAPIN.

It localises to the lysosome membrane. Functionally, as part of the BORC complex may play a role in lysosomes movement and localization at the cell periphery. Associated with the cytosolic face of lysosomes, the BORC complex may recruit ARL8B and couple lysosomes to microtubule plus-end-directed kinesin motor. This chain is BLOC-1-related complex subunit 7, found in Mus musculus (Mouse).